We begin with the raw amino-acid sequence, 332 residues long: Isopentenyl-diphosphate delta-isomerase (332 aa).

6-7 serves as a coordination point for substrate; the sequence is RK. FMN is bound by residues 65–67, Ser-95, and Asn-123; that span reads AMT. Residue 95–97 coordinates substrate; the sequence is SGR. Gln-157 is a substrate binding site. Position 158 (Glu-158) interacts with Mg(2+). FMN-binding positions include Lys-187, Thr-217, 264–266, Ala-285, and 285–286; these read GVY and AR.

This sequence belongs to the IPP isomerase type 2 family. In terms of assembly, homooctamer. Dimer of tetramers. It depends on FMN as a cofactor. Requires NADPH as cofactor. Mg(2+) serves as cofactor.

The protein resides in the cytoplasm. The catalysed reaction is isopentenyl diphosphate = dimethylallyl diphosphate. With respect to regulation, competitively inhibited by N,N-dimethyl-2-amino-1-ethyl diphosphate (NIPP) and isopentyl diphosphate. Functionally, involved in the biosynthesis of isoprenoids. Catalyzes the 1,3-allylic rearrangement of the homoallylic substrate isopentenyl (IPP) to its allylic isomer, dimethylallyl diphosphate (DMAPP). The chain is Isopentenyl-diphosphate delta-isomerase from Thermus thermophilus (strain ATCC BAA-163 / DSM 7039 / HB27).